The primary structure comprises 376 residues: D-alanine--D-alanine ligase (376 aa).

An ATP-grasp domain is found at 155 to 361; the sequence is KIIFEKAGIP…YPELIEKLID (207 aa). An ATP-binding site is contributed by 188 to 243; sequence EEKFSYPVFVKPSNAGSSVGVSKAHDKNELKEALIYAARYDRKVLIEEFINGREVE. 3 residues coordinate Mg(2+): Asp-314, Glu-328, and Asn-330.

This sequence belongs to the D-alanine--D-alanine ligase family. Mg(2+) is required as a cofactor. Mn(2+) serves as cofactor.

The protein localises to the cytoplasm. The catalysed reaction is 2 D-alanine + ATP = D-alanyl-D-alanine + ADP + phosphate + H(+). The protein operates within cell wall biogenesis; peptidoglycan biosynthesis. Its function is as follows. Cell wall formation. The chain is D-alanine--D-alanine ligase from Acetivibrio thermocellus (strain ATCC 27405 / DSM 1237 / JCM 9322 / NBRC 103400 / NCIMB 10682 / NRRL B-4536 / VPI 7372) (Clostridium thermocellum).